The sequence spans 160 residues: Transcription antitermination protein NusB (160 aa).

Belongs to the NusB family.

In terms of biological role, involved in transcription antitermination. Required for transcription of ribosomal RNA (rRNA) genes. Binds specifically to the boxA antiterminator sequence of the ribosomal RNA (rrn) operons. The chain is Transcription antitermination protein NusB from Mycolicibacterium smegmatis (strain ATCC 700084 / mc(2)155) (Mycobacterium smegmatis).